The chain runs to 194 residues: Molybdenum cofactor guanylyltransferase (194 aa).

GTP contacts are provided by residues 12–14, K25, N53, D70, and D100; that span reads LAG. Mg(2+) is bound at residue D100.

The protein belongs to the MobA family. Monomer. The cofactor is Mg(2+).

It is found in the cytoplasm. The enzyme catalyses Mo-molybdopterin + GTP + H(+) = Mo-molybdopterin guanine dinucleotide + diphosphate. Transfers a GMP moiety from GTP to Mo-molybdopterin (Mo-MPT) cofactor (Moco or molybdenum cofactor) to form Mo-molybdopterin guanine dinucleotide (Mo-MGD) cofactor. The polypeptide is Molybdenum cofactor guanylyltransferase (Aliivibrio fischeri (strain MJ11) (Vibrio fischeri)).